The primary structure comprises 290 residues: Ribosomal RNA small subunit methyltransferase H (290 aa).

S-adenosyl-L-methionine-binding positions include 35-37, Asp-54, Phe-81, Asp-97, and Gln-104; that span reads GGH.

The protein belongs to the methyltransferase superfamily. RsmH family.

Its subcellular location is the cytoplasm. It carries out the reaction cytidine(1402) in 16S rRNA + S-adenosyl-L-methionine = N(4)-methylcytidine(1402) in 16S rRNA + S-adenosyl-L-homocysteine + H(+). Its function is as follows. Specifically methylates the N4 position of cytidine in position 1402 (C1402) of 16S rRNA. The protein is Ribosomal RNA small subunit methyltransferase H of Picosynechococcus sp. (strain ATCC 27264 / PCC 7002 / PR-6) (Agmenellum quadruplicatum).